The following is a 433-amino-acid chain: 3-phosphoshikimate 1-carboxyvinyltransferase (433 aa).

Residues Lys23, Ser24, and Arg28 each contribute to the 3-phosphoshikimate site. Residue Lys23 participates in phosphoenolpyruvate binding. Phosphoenolpyruvate-binding residues include Gly95 and Arg123. Positions 167, 169, 317, and 344 each coordinate 3-phosphoshikimate. Gln169 contacts phosphoenolpyruvate. Asp317 acts as the Proton acceptor in catalysis. 2 residues coordinate phosphoenolpyruvate: Arg348 and Arg390.

This sequence belongs to the EPSP synthase family. In terms of assembly, monomer.

It localises to the cytoplasm. The enzyme catalyses 3-phosphoshikimate + phosphoenolpyruvate = 5-O-(1-carboxyvinyl)-3-phosphoshikimate + phosphate. Its pathway is metabolic intermediate biosynthesis; chorismate biosynthesis; chorismate from D-erythrose 4-phosphate and phosphoenolpyruvate: step 6/7. Functionally, catalyzes the transfer of the enolpyruvyl moiety of phosphoenolpyruvate (PEP) to the 5-hydroxyl of shikimate-3-phosphate (S3P) to produce enolpyruvyl shikimate-3-phosphate and inorganic phosphate. The protein is 3-phosphoshikimate 1-carboxyvinyltransferase of Staphylococcus epidermidis (strain ATCC 12228 / FDA PCI 1200).